An 878-amino-acid chain; its full sequence is Probable outer membrane protein PmpI (878 aa).

A signal peptide spans 1 to 24; the sequence is MRPDHMNFCCLCAAILSSTAVLFG. The segment covering 360–371 has biased composition (low complexity); that stretch reads SSKESPLPSSLQ. The segment at 360–381 is disordered; it reads SSKESPLPSSLQASVTSPTPAT. Over residues 372 to 381 the composition is skewed to polar residues; it reads ASVTSPTPAT. Residues 602-878 form the Autotransporter domain; the sequence is GGAYLFGTWG…SLDLGTTYRF (277 aa).

Belongs to the PMP outer membrane protein family.

It is found in the secreted. The protein resides in the cell wall. The protein localises to the cell outer membrane. The protein is Probable outer membrane protein PmpI (pmpI) of Chlamydia trachomatis serovar D (strain ATCC VR-885 / DSM 19411 / UW-3/Cx).